Consider the following 260-residue polypeptide: Methylthioribulose-1-phosphate dehydratase (260 aa).

A disordered region spans residues 1–26 (MTPPTTGLPAENTTDDNDHLVQSDDP). Positions 16–26 (DNDHLVQSDDP) are enriched in basic and acidic residues. Cys109 contributes to the substrate binding site. Zn(2+) contacts are provided by His127 and His129. The active-site Proton donor/acceptor is the Glu154. Position 211 (His211) interacts with Zn(2+).

It belongs to the aldolase class II family. MtnB subfamily. Requires Zn(2+) as cofactor.

The protein resides in the cytoplasm. The catalysed reaction is 5-(methylsulfanyl)-D-ribulose 1-phosphate = 5-methylsulfanyl-2,3-dioxopentyl phosphate + H2O. It participates in amino-acid biosynthesis; L-methionine biosynthesis via salvage pathway; L-methionine from S-methyl-5-thio-alpha-D-ribose 1-phosphate: step 2/6. In terms of biological role, catalyzes the dehydration of methylthioribulose-1-phosphate (MTRu-1-P) into 2,3-diketo-5-methylthiopentyl-1-phosphate (DK-MTP-1-P). The protein is Methylthioribulose-1-phosphate dehydratase of Podospora anserina (strain S / ATCC MYA-4624 / DSM 980 / FGSC 10383) (Pleurage anserina).